The sequence spans 302 residues: Oxygen-dependent coproporphyrinogen-III oxidase (302 aa).

S94 serves as a coordination point for substrate. H98 and H108 together coordinate a divalent metal cation. The Proton donor role is filled by H108. N110–R112 lines the substrate pocket. Residues H147 and H177 each coordinate a divalent metal cation. Residues Y242–Q277 form an important for dimerization region. G260 to R262 lines the substrate pocket.

It belongs to the aerobic coproporphyrinogen-III oxidase family. As to quaternary structure, homodimer. Requires a divalent metal cation as cofactor.

It is found in the cytoplasm. The enzyme catalyses coproporphyrinogen III + O2 + 2 H(+) = protoporphyrinogen IX + 2 CO2 + 2 H2O. The protein operates within porphyrin-containing compound metabolism; protoporphyrin-IX biosynthesis; protoporphyrinogen-IX from coproporphyrinogen-III (O2 route): step 1/1. Its function is as follows. Involved in the heme biosynthesis. Catalyzes the aerobic oxidative decarboxylation of propionate groups of rings A and B of coproporphyrinogen-III to yield the vinyl groups in protoporphyrinogen-IX. The polypeptide is Oxygen-dependent coproporphyrinogen-III oxidase (Shewanella sp. (strain ANA-3)).